Reading from the N-terminus, the 177-residue chain is KxDL motif-containing protein 1 (177 aa).

Residue M1 is modified to N-acetylmethionine. The tract at residues 100 to 177 (SHIPEGSFLE…TDDEEETHEE (78 aa)) is disordered. Polar residues predominate over residues 125–145 (ATSEQSTGSCDTSPDTVSPSL).

It belongs to the KXD1 family. In terms of assembly, component of the BLOC-one-related complex (BORC) which is composed of BLOC1S1, BLOC1S2, BORCS5, BORCS6, BORCS7, BORCS8, KXD1 and SNAPIN. Associates with the BLOC-1 complex. Interacts with BLOC1S1. Interacts with DTNBP1/BLOC1S7 (via coiled-coil domain). As to expression, widely expressed.

The protein resides in the lysosome membrane. Its function is as follows. As part of the BORC complex may play a role in lysosomes movement and localization at the cell periphery. Associated with the cytosolic face of lysosomes, the BORC complex may recruit ARL8B and couple lysosomes to microtubule plus-end-directed kinesin motor. May also be involved in the biogenesis of lysosome-related organelles such as melanosomes. In Mus musculus (Mouse), this protein is KxDL motif-containing protein 1 (Kxd1).